Consider the following 247-residue polypeptide: 5'-nucleotidase SurE (247 aa).

The a divalent metal cation site is built by aspartate 8, aspartate 9, serine 39, and asparagine 91.

Belongs to the SurE nucleotidase family. It depends on a divalent metal cation as a cofactor.

It is found in the cytoplasm. The enzyme catalyses a ribonucleoside 5'-phosphate + H2O = a ribonucleoside + phosphate. Functionally, nucleotidase that shows phosphatase activity on nucleoside 5'-monophosphates. The chain is 5'-nucleotidase SurE from Azoarcus sp. (strain BH72).